Consider the following 175-residue polypeptide: Nascent polypeptide-associated complex subunit beta (175 aa).

2 disordered regions span residues 1 to 36 (MDKE…SQGD) and 129 to 175 (RQAA…EELE). Positions 34 to 101 (QGDDRKLQAA…GQTKELTELV (68 aa)) constitute an NAC-A/B domain. The segment covering 149–163 (EGDDEIPDLVDNFDE) has biased composition (acidic residues). The span at 164 to 175 (AEVKKSDLEELE) shows a compositional bias: basic and acidic residues.

It belongs to the NAC-beta family. In terms of assembly, part of the nascent polypeptide-associated complex (NAC), consisting of EGD2 and EGD1. NAC associates with ribosomes via EGD1.

It localises to the cytoplasm. The protein resides in the nucleus. Its function is as follows. Component of the nascent polypeptide-associated complex (NAC), a dynamic component of the ribosomal exit tunnel, protecting the emerging polypeptides from interaction with other cytoplasmic proteins to ensure appropriate nascent protein targeting. The NAC complex also promotes mitochondrial protein import by enhancing productive ribosome interactions with the outer mitochondrial membrane and blocks the inappropriate interaction of ribosomes translating non-secretory nascent polypeptides with translocation sites in the membrane of the endoplasmic reticulum. EGD1 may act as a transcription factor that exert a negative effect on the expression of several genes that are transcribed by RNA polymerase II. The chain is Nascent polypeptide-associated complex subunit beta (EGD1) from Cryptococcus neoformans var. neoformans serotype D (strain B-3501A) (Filobasidiella neoformans).